Here is a 177-residue protein sequence, read N- to C-terminus: UPF0114 protein jhp_0175 (177 aa).

A run of 3 helical transmembrane segments spans residues 15 to 35, 54 to 74, and 145 to 165; these read WLLA…GYVF, LVLS…VLMV, and PIFW…LTAV.

This sequence belongs to the UPF0114 family.

Its subcellular location is the cell membrane. This is UPF0114 protein jhp_0175 from Helicobacter pylori (strain J99 / ATCC 700824) (Campylobacter pylori J99).